The sequence spans 136 residues: Protein NrdI (136 aa).

It belongs to the NrdI family.

In terms of biological role, probably involved in ribonucleotide reductase function. The protein is Protein NrdI of Enterobacter sp. (strain 638).